Consider the following 147-residue polypeptide: Large ribosomal subunit protein bL9 (147 aa).

The protein belongs to the bacterial ribosomal protein bL9 family.

Functionally, binds to the 23S rRNA. The chain is Large ribosomal subunit protein bL9 from Citrifermentans bemidjiense (strain ATCC BAA-1014 / DSM 16622 / JCM 12645 / Bem) (Geobacter bemidjiensis).